Here is a 206-residue protein sequence, read N- to C-terminus: MYNKLQYISQGKTIEEQLLNIRKALENGCQWIQMRFKDTHSDNVFTLAEAVKRMCQEYTATFIINDNVYLAKKINADGVHLGLNDMNIAEARTILGEAKIIGGTANTFEEVLQRTAENCNYIGLGPFQFTATKEKLSPVLGLEGYHLIIQQMKTKKNKIPIYAIGGIQLENVDDIMKTGIYGIAVSGLITQSENPFQLITQLNKKL.

Residues 33-37 (QMRFK) and asparagine 65 each bind 4-amino-2-methyl-5-(diphosphooxymethyl)pyrimidine. Mg(2+) is bound by residues aspartate 66 and aspartate 85. 4-amino-2-methyl-5-(diphosphooxymethyl)pyrimidine is bound at residue threonine 104. Residue 130–132 (TAT) coordinates 2-[(2R,5Z)-2-carboxy-4-methylthiazol-5(2H)-ylidene]ethyl phosphate. 4-amino-2-methyl-5-(diphosphooxymethyl)pyrimidine is bound at residue lysine 133. 2-[(2R,5Z)-2-carboxy-4-methylthiazol-5(2H)-ylidene]ethyl phosphate is bound at residue glycine 166.

It belongs to the thiamine-phosphate synthase family. The cofactor is Mg(2+).

It carries out the reaction 2-[(2R,5Z)-2-carboxy-4-methylthiazol-5(2H)-ylidene]ethyl phosphate + 4-amino-2-methyl-5-(diphosphooxymethyl)pyrimidine + 2 H(+) = thiamine phosphate + CO2 + diphosphate. The catalysed reaction is 2-(2-carboxy-4-methylthiazol-5-yl)ethyl phosphate + 4-amino-2-methyl-5-(diphosphooxymethyl)pyrimidine + 2 H(+) = thiamine phosphate + CO2 + diphosphate. It catalyses the reaction 4-methyl-5-(2-phosphooxyethyl)-thiazole + 4-amino-2-methyl-5-(diphosphooxymethyl)pyrimidine + H(+) = thiamine phosphate + diphosphate. Its pathway is cofactor biosynthesis; thiamine diphosphate biosynthesis; thiamine phosphate from 4-amino-2-methyl-5-diphosphomethylpyrimidine and 4-methyl-5-(2-phosphoethyl)-thiazole: step 1/1. Condenses 4-methyl-5-(beta-hydroxyethyl)thiazole monophosphate (THZ-P) and 2-methyl-4-amino-5-hydroxymethyl pyrimidine pyrophosphate (HMP-PP) to form thiamine monophosphate (TMP). This Flavobacterium psychrophilum (strain ATCC 49511 / DSM 21280 / CIP 103535 / JIP02/86) protein is Thiamine-phosphate synthase.